We begin with the raw amino-acid sequence, 238 residues long: DNA damage-regulated autophagy modulator protein 1 (238 aa).

6 helical membrane-spanning segments follow: residues 9–29 (AFVP…SYVV), 53–73 (SGIF…TMYT), 91–111 (VFNL…GIVA), 116–136 (LAVP…GVVY), 161–181 (MVIS…ASLI), and 200–220 (VSAI…LTFI).

It belongs to the DRAM/TMEM150 family.

The protein resides in the lysosome membrane. Its function is as follows. Lysosomal modulator of autophagy that plays a central role in p53/TP53-mediated apoptosis. Not involved in p73/TP73-mediated autophagy. The sequence is that of DNA damage-regulated autophagy modulator protein 1 (DRAM1) from Homo sapiens (Human).